The primary structure comprises 64 residues: Large ribosomal subunit protein bL35 (64 aa).

Belongs to the bacterial ribosomal protein bL35 family.

This is Large ribosomal subunit protein bL35 from Shewanella putrefaciens (strain CN-32 / ATCC BAA-453).